We begin with the raw amino-acid sequence, 92 residues long: MARSIWKGPFVDGYLLKKAEAARASTRSEVIKIWSRRSTILPQFVGLTFGVYNGHKHVPVSVTEDMIGHKFGEFSPTRTFHGHAADKKARRG.

This sequence belongs to the universal ribosomal protein uS19 family.

Its function is as follows. Protein S19 forms a complex with S13 that binds strongly to the 16S ribosomal RNA. In Beijerinckia indica subsp. indica (strain ATCC 9039 / DSM 1715 / NCIMB 8712), this protein is Small ribosomal subunit protein uS19.